Here is a 237-residue protein sequence, read N- to C-terminus: tRNA (guanine-N(7)-)-methyltransferase (237 aa).

S-adenosyl-L-methionine contacts are provided by E67, E92, D119, and D141. Residue D141 is part of the active site. Substrate contacts are provided by residues K145, D177, and 214-217 (TRYE).

The protein belongs to the class I-like SAM-binding methyltransferase superfamily. TrmB family.

It carries out the reaction guanosine(46) in tRNA + S-adenosyl-L-methionine = N(7)-methylguanosine(46) in tRNA + S-adenosyl-L-homocysteine. Its pathway is tRNA modification; N(7)-methylguanine-tRNA biosynthesis. In terms of biological role, catalyzes the formation of N(7)-methylguanine at position 46 (m7G46) in tRNA. The polypeptide is tRNA (guanine-N(7)-)-methyltransferase (Ruegeria pomeroyi (strain ATCC 700808 / DSM 15171 / DSS-3) (Silicibacter pomeroyi)).